Reading from the N-terminus, the 348-residue chain is Heat-inducible transcription repressor HrcA (348 aa).

It belongs to the HrcA family.

Negative regulator of class I heat shock genes (grpE-dnaK-dnaJ and groELS operons). Prevents heat-shock induction of these operons. This is Heat-inducible transcription repressor HrcA from Syntrophobacter fumaroxidans (strain DSM 10017 / MPOB).